The following is a 341-amino-acid chain: Serine/threonine-protein kinase-like protein At5g23170 (341 aa).

One can recognise a Protein kinase domain in the interval 16–298; sequence FSPSKLIGKG…FGEITAEIVA (283 aa). Residues 22 to 30 and Lys-51 each bind ATP; that span reads IGKGSHGYV. The tract at residues 52–75 is disordered; it reads TPSSLSPSSPSSSSSSKSEQTKKL. A compositionally biased stretch (low complexity) spans 53 to 69; it reads PSSLSPSSPSSSSSSKS. Catalysis depends on Asp-153, which acts as the Proton acceptor. A coiled-coil region spans residues 311–332; it reads MSVLRRVVKLKRRKKRLRETLT.

Belongs to the protein kinase superfamily. Ser/Thr protein kinase family. Ubiquitous. Higher expression in mature stamina and pollen.

It catalyses the reaction L-seryl-[protein] + ATP = O-phospho-L-seryl-[protein] + ADP + H(+). The enzyme catalyses L-threonyl-[protein] + ATP = O-phospho-L-threonyl-[protein] + ADP + H(+). This chain is Serine/threonine-protein kinase-like protein At5g23170, found in Arabidopsis thaliana (Mouse-ear cress).